The chain runs to 579 residues: Membrane protein insertase YidC (579 aa).

The helical transmembrane segment at 10–30 (LVIVTILSALILFGWSFVTKH) threads the bilayer. Residues 35–61 (PPAPTQQGKNQPKAELTAEESGDKPLK) are disordered. 5 consecutive transmembrane segments (helical) span residues 330 to 350 (FDKA…FYYL), 351 to 371 (DWLF…VFTI), 423 to 443 (VNPF…IALY), 478 to 498 (LLHF…ILGI), and 523 to 543 (PLIS…YYIF). The segment covering 560 to 572 (STPEERQDRAERK) has biased composition (basic and acidic residues). The interval 560–579 (STPEERQDRAERKRPSKKKA) is disordered.

Belongs to the OXA1/ALB3/YidC family. Type 1 subfamily. In terms of assembly, interacts with the Sec translocase complex via SecD. Specifically interacts with transmembrane segments of nascent integral membrane proteins during membrane integration.

It is found in the cell inner membrane. Functionally, required for the insertion and/or proper folding and/or complex formation of integral membrane proteins into the membrane. Involved in integration of membrane proteins that insert both dependently and independently of the Sec translocase complex, as well as at least some lipoproteins. Aids folding of multispanning membrane proteins. In Zymomonas mobilis subsp. mobilis (strain ATCC 31821 / ZM4 / CP4), this protein is Membrane protein insertase YidC.